Reading from the N-terminus, the 377-residue chain is F-box protein At1g11810 (377 aa).

The 47-residue stretch at 2-48 (TTTMSTLPVVLVDEILARVPITSLRSLRSTCKKWEASSKTNLVGGKA) folds into the F-box domain.

The protein is F-box protein At1g11810 of Arabidopsis thaliana (Mouse-ear cress).